A 110-amino-acid chain; its full sequence is Transcription factor S (110 aa).

The Zn(2+) site is built by C4, C7, C22, C25, C71, C74, C99, and C102. The C4-type zinc finger occupies C4 to C25. The segment at T67–R107 adopts a TFIIS-type zinc-finger fold.

The protein belongs to the archaeal RpoM/eukaryotic RPA12/RPB9/RPC11 RNA polymerase family.

In terms of biological role, induces RNA cleavage activity in the RNA polymerase. In its presence, the cleavage activity of the RNA polymerase truncates the RNA back to position +15 in a stepwise manner by releasing mainly dinucleotides from the 3'-end of the nascent RNA. The truncated RNAs are able to continue elongation. Involved in transcriptional proofreading and fidelity. Misincorporation of nucleotides during elongation of transcription leads to arrested elongation complexes which are rescued by TFS-promoted removal of a dinucleotide from the 3'-end. TFS is able to induce a cleavage resynthesis cycle in stalled elongation complexes (resulting from the next missing nucleotide or a reduced incorporation rate of a wrong nucleotide) preventing misincorporation and enabling proofreading in a post-incorporation manner. Pausing of elongation complexes is the main determinant of TFS-induced RNA cleavage. This is Transcription factor S from Thermococcus celer.